The primary structure comprises 440 residues: Glutamyl-tRNA reductase (440 aa).

Residues 50–53 (TCNR), Ser109, 114–116 (EPQ), and Gln120 each bind substrate. The active-site Nucleophile is Cys51. 189-194 (GAGEMA) is a binding site for NADP(+).

Belongs to the glutamyl-tRNA reductase family. Homodimer.

The catalysed reaction is (S)-4-amino-5-oxopentanoate + tRNA(Glu) + NADP(+) = L-glutamyl-tRNA(Glu) + NADPH + H(+). It functions in the pathway porphyrin-containing compound metabolism; protoporphyrin-IX biosynthesis; 5-aminolevulinate from L-glutamyl-tRNA(Glu): step 1/2. Functionally, catalyzes the NADPH-dependent reduction of glutamyl-tRNA(Glu) to glutamate 1-semialdehyde (GSA). The polypeptide is Glutamyl-tRNA reductase (Nitratidesulfovibrio vulgaris (strain DP4) (Desulfovibrio vulgaris)).